The following is a 61-amino-acid chain: Large ribosomal subunit protein eL20 (61 aa).

The protein belongs to the eukaryotic ribosomal protein eL20 family. Part of the 50S ribosomal subunit. Binds 23S rRNA.

The chain is Large ribosomal subunit protein eL20 from Methanosarcina acetivorans (strain ATCC 35395 / DSM 2834 / JCM 12185 / C2A).